A 260-amino-acid polypeptide reads, in one-letter code: Uroplakin-1b (260 aa).

Over 1–15 the chain is Cytoplasmic; that stretch reads MAKDDSTVRCFQGLL. The helical transmembrane segment at 16–36 threads the bilayer; that stretch reads IFGHVIVGMCGIALTAECIFF. The Extracellular portion of the chain corresponds to 37 to 59; the sequence is VSDQHSLYPLLEATNNDDIFGAA. Residues 60–80 form a helical membrane-spanning segment; it reads WIGMFVGICLFCLSVLAIVGI. The Cytoplasmic portion of the chain corresponds to 81–86; it reads MKSNRK. Residues 87 to 107 traverse the membrane as a helical segment; sequence ILLAYFIMMFIVYGFEVASCI. The Extracellular segment spans residues 108-229; it reads TAATQRDFFT…ELISGPMDRH (122 aa). Residues 230–250 traverse the membrane as a helical segment; sequence AWGVAWFGFAILCWTFWVLLG. Residues 251–260 are Cytoplasmic-facing; sequence TMFYWSRIEY.

Belongs to the tetraspanin (TM4SF) family. As to quaternary structure, heterodimer with uroplakin-3A (UPK3A) or uroplakin-3B (UPK3B). Post-translationally, N-glycosylated with high-mannose oligosaccharides.

It is found in the membrane. Component of the asymmetric unit membrane (AUM); a highly specialized biomembrane elaborated by terminally differentiated urothelial cells. May play an important role in normal bladder epithelial physiology, possibly in regulating membrane permeability of superficial umbrella cells or in stabilizing the apical membrane through AUM/cytoskeletal interactions. This chain is Uroplakin-1b (Upk1b), found in Rattus norvegicus (Rat).